The chain runs to 105 residues: Large ribosomal subunit protein uL24 (105 aa).

It belongs to the universal ribosomal protein uL24 family. Part of the 50S ribosomal subunit.

In terms of biological role, one of two assembly initiator proteins, it binds directly to the 5'-end of the 23S rRNA, where it nucleates assembly of the 50S subunit. One of the proteins that surrounds the polypeptide exit tunnel on the outside of the subunit. This is Large ribosomal subunit protein uL24 from Xylella fastidiosa (strain M23).